A 124-amino-acid polypeptide reads, in one-letter code: uncharacterized protein (124 aa).

3 consecutive transmembrane segments (helical) span residues 13-33 (LIQI…VLQL), 43-63 (GLFW…PEFF), and 71-91 (GVGR…FYLI).

The protein to M.thermoautotrophicum MTH137.

Its subcellular location is the cell membrane. This is an uncharacterized protein from Methanocaldococcus jannaschii (strain ATCC 43067 / DSM 2661 / JAL-1 / JCM 10045 / NBRC 100440) (Methanococcus jannaschii).